Consider the following 868-residue polypeptide: MSSPKQTPMIAQYLSIKAAHPETLLFFRMGDFYELFFDDAKQAAEALNIALTSRGKSEGEPIPMAGIPVHARQTYLNKLIEAGFKVAICEQMEPPGASKGPVRREVVRTVTPGTLTEESLLSPRENNYLVSYLPAAKRHPHALAALDLSTGEFFALTLEREDQVAAELSRLEPAELLIPDNWEPEPWLKGWKRCLSRRGSWSFDGKEGARVLLEHFQVTSLESFGVADSPPCLGVCGALLHYCRETQKEALSHITGLSRLHQQEGMVLDETCRRNLELNYNLKDGSRKSSLLGVMDRCITPMGSRLLAQWINRPLQSLDAIATRQESVSWLRENLVAYQDLRERLRMVHDLERFLSRIALRRASPRDLGGLRQTLQCLPQLYAILTPADGHSLAVPSLLRILADHFNGHEALTKQLEQQLADELPLNLKEGETIRLGFDQTLDTLRSLSRDGKSYLTKLEVEEREKTGIPSLKIKYHRSFGYSMEVTKTHLDKVPPRYIQRQTMTNGVRYVTEELKEYEEQLLTAEERMLEREQLLFEALAEQVARQAETLQASARAIATLDVLANFAHIAEERNYCRPLLHEGAVIEINQGRHPVVEQFSDTPFVANDIRLDNRQRTGLITGPNMAGKSTLMRQVALIVLLAHTGACVPAGSAKIGRVDRIFTRVGASDDLAGGRSTFMVEMTETAHILHHASERSLVILDEIGRGTSTYDGLSIAWAVAEHIHTQCQARTLFATHYHELTQLESQLDGVFNLTVEVKEWKDQILFLHTIVRGAADRSYGIHVAQLAGLPRAVTRRAREVLADLEEHAVHHPDSMGQGHAPASQPYQLTLFEDAPPSPALLELKRVDPDELTPKEALEALYRLKELL.

Position 623-630 (623-630 (GPNMAGKS)) interacts with ATP.

This sequence belongs to the DNA mismatch repair MutS family.

Functionally, this protein is involved in the repair of mismatches in DNA. It is possible that it carries out the mismatch recognition step. This protein has a weak ATPase activity. The protein is DNA mismatch repair protein MutS of Magnetococcus marinus (strain ATCC BAA-1437 / JCM 17883 / MC-1).